Reading from the N-terminus, the 117-residue chain is Eukaryotic translation initiation factor 4E-binding protein 1 (117 aa).

Composition is skewed to polar residues over residues 1–12 (MSAGSSCSQTPS) and 33–47 (YSTTPGGTLFSTTPG). A disordered region spans residues 1–47 (MSAGSSCSQTPSRAIPTRRVALGDGVQLPPGDYSTTPGGTLFSTTPG). The residue at position 2 (S2) is an N-acetylserine. Residues T36 and T40 each carry the phosphothreonine modification. Position 43 is a phosphoserine (S43). 2 positions are modified to phosphothreonine: T45 and T49. A Phosphotyrosine modification is found at Y53. A YXXXXLphi motif motif is present at residues 53–59 (YDRKFLM). K56 participates in a covalent cross-link: Glycyl lysine isopeptide (Lys-Gly) (interchain with G-Cter in ubiquitin). At S64 the chain carries Phosphoserine. Positions 64–117 (SPVAKTPPKDLPAIPGVTSPTSDEPPMQASQSQLPSSPEDKRAGGEESQFEMDI) are disordered. T69 is subject to Phosphothreonine. Polar residues predominate over residues 81–99 (TSPTSDEPPMQASQSQLPS). Residues S82, S95, S99, S100, and S111 each carry the phosphoserine modification. The TOS motif motif lies at 113–117 (FEMDI).

Belongs to the eIF4E-binding protein family. In terms of assembly, hypophosphorylated EIF4EBP1 competes with EIF4G1/EIF4G3 to interact with EIF4E; insulin stimulated MAP-kinase (MAPK1 and MAPK3) or mTORC1 phosphorylation of EIF4EBP1 causes dissociation of the complex allowing EIF4G1/EIF4G3 to bind and consequent initiation of translation. Interacts (via TOS motif) with RPTOR; promoting phosphorylation by mTORC1. Phosphorylated on serine and threonine residues in response to insulin, EGF and PDGF. Phosphorylation at Thr-36, Thr-45, Ser-64 and Thr-69, corresponding to the hyperphosphorylated form, is regulated by mTORC1 and abolishes binding to EIF4E. In terms of processing, ubiquitinated: when eIF4E levels are low, hypophosphorylated form is ubiquitinated by the BCR(KLHL25) complex, leading to its degradation and serving as a homeostatic mechanism to maintain translation and prevent eIF4E inhibition when eIF4E levels are low. Not ubiquitinated when hyperphosphorylated (at Thr-36, Thr-45, Ser-64 and Thr-69) or associated with eIF4E. Highest expression in fat cells.

The protein localises to the cytoplasm. It is found in the nucleus. Its function is as follows. Repressor of translation initiation that regulates EIF4E activity by preventing its assembly into the eIF4F complex: hypophosphorylated form competes with EIF4G1/EIF4G3 and strongly binds to EIF4E, leading to repress translation. In contrast, hyperphosphorylated form dissociates from EIF4E, allowing interaction between EIF4G1/EIF4G3 and EIF4E, leading to initiation of translation. Mediates the regulation of protein translation by hormones, growth factors and other stimuli that signal through the MAP kinase and mTORC1 pathways. In Mus musculus (Mouse), this protein is Eukaryotic translation initiation factor 4E-binding protein 1 (Eif4ebp1).